The chain runs to 472 residues: MTEFGIRNMDQVAPVYNGHRAMLKRQLAFDNVSVPTSLYSGLFSAYEEEQAVPTGLDSYSHDSSSCELPLLTPCSKAVMSQALKNTFNGFAKKRFRLGILSNPWLWDENNVFQWLWWAAKEFSLQNVNFQKFLMNGHELCSLGKERFLALAPDFVGDILWEHLEEMMKEHQEKAQEPYIDHSNQDSINHWMNADSLNFTTDPLQCGAQVHNYPKNGMFNDMCSVPTGQTLLQPKQEFQQYPSSCLKSRAVNYSPASQDFARSNMNALLNSLNSGKLRDYDSGDSGTESFESTESLLQSWTSQSSLVDMQRVPSYDGFEEDGSQALCLNKPPMSFKDYIQDRCEPAELGKPVIPASILAGFTGSGPIQLWQFLLELLTDKSCQSFISWTGDGWEFKLTDPDEVARRWGKRKNKPKMNYEKLSRGLRYYYDKNIIHKTSGKRYVYRFVCDLHNLLGYTPDELHAMLGVQPDTDE.

In terms of domain architecture, PNT spans 85-170 (NTFNGFAKKR…EHLEEMMKEH (86 aa)). The ETS DNA-binding region spans 366-446 (IQLWQFLLEL…SGKRYVYRFV (81 aa)).

The protein belongs to the ETS family.

The protein resides in the nucleus. Functionally, probable transcription factor. This chain is Protein c-ets-2-A (ets2-a), found in Xenopus laevis (African clawed frog).